A 678-amino-acid polypeptide reads, in one-letter code: DNA ligase (678 aa).

Residues 36–40 (DAEYD), 85–86 (SL), and Glu117 each bind NAD(+). The active-site N6-AMP-lysine intermediate is Lys119. Residues Arg140, Glu177, Lys294, and Lys318 each contribute to the NAD(+) site. Zn(2+) is bound by residues Cys412, Cys415, Cys430, and Cys436. Residues 595–678 (ADEQPLNGQT…NLLREHGIEV (84 aa)) form the BRCT domain.

Belongs to the NAD-dependent DNA ligase family. LigA subfamily. Mg(2+) is required as a cofactor. Requires Mn(2+) as cofactor.

It carries out the reaction NAD(+) + (deoxyribonucleotide)n-3'-hydroxyl + 5'-phospho-(deoxyribonucleotide)m = (deoxyribonucleotide)n+m + AMP + beta-nicotinamide D-nucleotide.. In terms of biological role, DNA ligase that catalyzes the formation of phosphodiester linkages between 5'-phosphoryl and 3'-hydroxyl groups in double-stranded DNA using NAD as a coenzyme and as the energy source for the reaction. It is essential for DNA replication and repair of damaged DNA. The protein is DNA ligase of Marinobacter nauticus (strain ATCC 700491 / DSM 11845 / VT8) (Marinobacter aquaeolei).